We begin with the raw amino-acid sequence, 91 residues long: DNA-directed RNA polymerase subunit omega (91 aa).

This sequence belongs to the RNA polymerase subunit omega family. As to quaternary structure, the RNAP catalytic core consists of 2 alpha, 1 beta, 1 beta' and 1 omega subunit. When a sigma factor is associated with the core the holoenzyme is formed, which can initiate transcription.

The enzyme catalyses RNA(n) + a ribonucleoside 5'-triphosphate = RNA(n+1) + diphosphate. In terms of biological role, promotes RNA polymerase assembly. Latches the N- and C-terminal regions of the beta' subunit thereby facilitating its interaction with the beta and alpha subunits. In Psychromonas ingrahamii (strain DSM 17664 / CCUG 51855 / 37), this protein is DNA-directed RNA polymerase subunit omega.